Consider the following 882-residue polypeptide: Alanine--tRNA ligase (882 aa).

Residues H567, H571, C669, and H673 each contribute to the Zn(2+) site.

Belongs to the class-II aminoacyl-tRNA synthetase family. Zn(2+) is required as a cofactor.

The protein resides in the cytoplasm. It carries out the reaction tRNA(Ala) + L-alanine + ATP = L-alanyl-tRNA(Ala) + AMP + diphosphate. Its function is as follows. Catalyzes the attachment of alanine to tRNA(Ala) in a two-step reaction: alanine is first activated by ATP to form Ala-AMP and then transferred to the acceptor end of tRNA(Ala). Also edits incorrectly charged Ser-tRNA(Ala) and Gly-tRNA(Ala) via its editing domain. The chain is Alanine--tRNA ligase from Thermosynechococcus vestitus (strain NIES-2133 / IAM M-273 / BP-1).